We begin with the raw amino-acid sequence, 110 residues long: Snake venom vascular endothelial growth factor toxin HF (110 aa).

Pyrrolidone carboxylic acid is present on glutamine 1. 3 disulfide bridges follow: cysteine 14–cysteine 56, cysteine 45–cysteine 91, and cysteine 49–cysteine 93.

It belongs to the PDGF/VEGF growth factor family. Snake venom VEGF subfamily. Homodimer; disulfide-linked. Interacts with VEGF receptor-2 (KDR) with high affinity. Expressed by the venom gland.

It is found in the secreted. In terms of biological role, snake venom VEGFs that may contribute to venom dispersion and prey subjugation by inducing vascular permeability and hypotension. This protein induces an increase in capillary permeability after intradermal injection, as well as a drastic hypotensive effect after intravenous injection. The hypotension is mediated by nitric oxide (NO), which is produced by VEGF-activated endothelium NO synthase. Also induces angiogenesis in vitro, probably through VEGF receptor (KDR/VEGFR-2) signaling. In Vipera aspis aspis (Aspic viper), this protein is Snake venom vascular endothelial growth factor toxin HF.